An 87-amino-acid polypeptide reads, in one-letter code: Small ribosomal subunit protein bS20 (87 aa).

Residues 1 to 21 are disordered; the sequence is MANHKSAEKRARQTIKKTERN.

This sequence belongs to the bacterial ribosomal protein bS20 family.

Its function is as follows. Binds directly to 16S ribosomal RNA. This is Small ribosomal subunit protein bS20 from Campylobacter jejuni subsp. jejuni serotype O:23/36 (strain 81-176).